Reading from the N-terminus, the 369-residue chain is Methionine import ATP-binding protein MetN 1 (369 aa).

Positions 1-26 (MTTMTVPPSLLPLEPFPTAPDTRAST) are disordered. In terms of domain architecture, ABC transporter spans 29 to 265 (IRLHGLGKRY…PRHAVTRSLL (237 aa)). Position 62-69 (62-69 (GRSGAGKS)) interacts with ATP.

It belongs to the ABC transporter superfamily. Methionine importer (TC 3.A.1.24) family. The complex is composed of two ATP-binding proteins (MetN), two transmembrane proteins (MetI) and a solute-binding protein (MetQ).

It is found in the cell inner membrane. It carries out the reaction L-methionine(out) + ATP + H2O = L-methionine(in) + ADP + phosphate + H(+). It catalyses the reaction D-methionine(out) + ATP + H2O = D-methionine(in) + ADP + phosphate + H(+). Its function is as follows. Part of the ABC transporter complex MetNIQ involved in methionine import. Responsible for energy coupling to the transport system. The sequence is that of Methionine import ATP-binding protein MetN 1 from Pseudomonas aeruginosa (strain UCBPP-PA14).